Here is a 148-residue protein sequence, read N- to C-terminus: Small ribosomal subunit protein uS7m (148 aa).

Belongs to the universal ribosomal protein uS7 family. Part of the small ribosomal subunit.

The protein resides in the mitochondrion. In terms of biological role, one of the primary rRNA binding proteins, it binds directly to 18S rRNA where it nucleates assembly of the head domain of the small subunit. This is Small ribosomal subunit protein uS7m (RPS7) from Arabidopsis thaliana (Mouse-ear cress).